A 538-amino-acid chain; its full sequence is Cytochrome P450 monooxygenase cfoH (538 aa).

Residues 24 to 44 (VLTFFAILLVAILLWYMIPYF) form a helical membrane-spanning segment. Cysteine 471 provides a ligand contact to heme.

It belongs to the cytochrome P450 family. The cofactor is heme.

Its subcellular location is the membrane. The protein operates within secondary metabolite biosynthesis; flavonoid biosynthesis. Its function is as follows. Cytochrome P450 monooxygenase; part of the gene cluster that mediates the biosynthesis of chlorflavonin, a fungal flavonoid with acetolactate synthase inhibitory activity. Within the pathway, cfoH is responsible for the hydroxylation of the flavonoid skeleton at position C2'. The pathway begins with the PKS-NRPS hybrid synthetase cfoA that uses benzoic acid or p-hydroxybenzoic acid as a starter unit with four rounds of chain elongation using malonyl-CoA to form the chalcone skeleton. Then, a new type of chalcone isomerase, cfoK, catalyzes the conversion of the chalcone into a flavanone by a histidine-mediated oxa-Michael addition mechanism. The desaturation of flavanone to flavone is catalyzed by a new type of flavone synthase, the flavin mononucleotide (FMN)-dependent oxidoreductase cfoJ. Monooxygenases cfoF, cfoG, and P450 cfoH are responsible for the hydroxylation of the flavonoid skeleton at sites C3, C8, and C2', respectively. Like cfoF, the dehydratase cfoI plays also a role in the hydroxylation of position C3. Methyltransferases cfoB, cfoC, and cfoD then catalyze the methylation of C7-OH, C8-OH, and C3-OH, respectively. Finally, the monooxygenase cfoE is responsible for the chlorination of flavonoid at position C3'. This is Cytochrome P450 monooxygenase cfoH from Aspergillus candidus.